The primary structure comprises 408 residues: Multidrug resistance protein MdtG (408 aa).

The next 10 membrane-spanning stretches (helical) occupy residues 16–36, 58–78, 92–112, 115–135, 146–166, 173–193, 224–244, 256–276, 290–310, and 378–398; these read LIVAWLGCFLTGAAFSLVMPF, IVFSITFLFSAIASPFWGGLA, LGMGIVMVLMGLAQNIWQFLI, ALLGLLGGFVPNANALIATQV, TLSTGGVSGALLGPMAGGLLA, PVFFITASVLILCFFVTLFCI, LFVTTLIIQVATGSIAPILTL, VAFISGMIASVPGVAALLSAP, ILITALIFSVLLLIPMSYVQT, and AVFLVTAGVVLFNAVYSWNSL.

This sequence belongs to the major facilitator superfamily. DHA1 family. MdtG (TC 2.A.1.2.20) subfamily.

It is found in the cell inner membrane. In terms of biological role, confers resistance to fosfomycin and deoxycholate. The sequence is that of Multidrug resistance protein MdtG from Escherichia coli O17:K52:H18 (strain UMN026 / ExPEC).